Reading from the N-terminus, the 293-residue chain is Shikimate dehydrogenase (NADP(+)) (293 aa).

Shikimate contacts are provided by residues 20–22 (SLT) and Thr-72. The active-site Proton acceptor is Lys-76. Shikimate is bound by residues Asn-97 and Asp-112. NADP(+)-binding positions include 136-140 (GAGGA) and Ile-230. Shikimate is bound at residue Tyr-232. Residue Gly-253 participates in NADP(+) binding.

It belongs to the shikimate dehydrogenase family. Homodimer.

The enzyme catalyses shikimate + NADP(+) = 3-dehydroshikimate + NADPH + H(+). The protein operates within metabolic intermediate biosynthesis; chorismate biosynthesis; chorismate from D-erythrose 4-phosphate and phosphoenolpyruvate: step 4/7. Involved in the biosynthesis of the chorismate, which leads to the biosynthesis of aromatic amino acids. Catalyzes the reversible NADPH linked reduction of 3-dehydroshikimate (DHSA) to yield shikimate (SA). In Arthrobacter sp. (strain FB24), this protein is Shikimate dehydrogenase (NADP(+)).